The chain runs to 491 residues: MGLCHSKIDKTTRKETGATSTATTTVERQSSGRLRRPRDLYSGGEISEIQQVVGRLVGNGSSEIACLYTQQGKKGTNQDAMLVWENFCSRSDTVLCGVFDGHGPFGHMVSKRVRDMLPFTLSTQLKTTSGTEQSSSKNGLNSAPTCVDEEQWCELQLCEKDEKLFPEMYLPLKRALLKTCQQMDKELKMHPTINCFCSGTTSVTVIKQGKDLVVGNIGDSRAVLATRDQDNALVAVQLTIDLKPDLPSESARIHRCKGRVFALQDEPEVARVWLPNSDSPGLAMARAFGDFCLKDYGLISVPDINYHRLTERDQYIILATDGVWDVLSNKEAVDIVASAPSRDTAARAVVDTAVRAWRLKYPTSKNDDCAVVCLFLEDTSAGGTVEVSETVNHSHEESTESVTITSSKDADKKEEASTETNETVPVWEIKEEKTPESCRIESKKTTLAECISVKDDEEWSALEGLTRVNSLLSIPRFFSGELRSSSWRKWL.

The segment covering 1–16 has biased composition (basic and acidic residues); that stretch reads MGLCHSKIDKTTRKET. The interval 1–39 is disordered; that stretch reads MGLCHSKIDKTTRKETGATSTATTTVERQSSGRLRRPRD. The span at 17 to 28 shows a compositional bias: low complexity; sequence GATSTATTTVER. A PPM-type phosphatase domain is found at 64–376; that stretch reads IACLYTQQGK…DDCAVVCLFL (313 aa). Residues D100, G101, D321, and D367 each coordinate Mn(2+). The disordered stretch occupies residues 391–422; the sequence is VNHSHEESTESVTITSSKDADKKEEASTETNE.

Belongs to the PP2C family. The cofactor is Mg(2+). Mn(2+) is required as a cofactor.

It carries out the reaction O-phospho-L-seryl-[protein] + H2O = L-seryl-[protein] + phosphate. The catalysed reaction is O-phospho-L-threonyl-[protein] + H2O = L-threonyl-[protein] + phosphate. The sequence is that of Probable protein phosphatase 2C 6 from Arabidopsis thaliana (Mouse-ear cress).